The chain runs to 359 residues: 3-isopropylmalate dehydrogenase (359 aa).

76-89 (GPKWDTIERSIRPE) lines the NAD(+) pocket. Residues Arg-96, Arg-106, Arg-134, and Asp-225 each contribute to the substrate site. Mg(2+)-binding residues include Asp-225, Asp-249, and Asp-253. NAD(+) is bound at residue 283–295 (GSAPDIAGQNVAN).

Belongs to the isocitrate and isopropylmalate dehydrogenases family. LeuB type 1 subfamily. Homodimer. Mg(2+) serves as cofactor. It depends on Mn(2+) as a cofactor.

It localises to the cytoplasm. The catalysed reaction is (2R,3S)-3-isopropylmalate + NAD(+) = 4-methyl-2-oxopentanoate + CO2 + NADH. It functions in the pathway amino-acid biosynthesis; L-leucine biosynthesis; L-leucine from 3-methyl-2-oxobutanoate: step 3/4. In terms of biological role, catalyzes the oxidation of 3-carboxy-2-hydroxy-4-methylpentanoate (3-isopropylmalate) to 3-carboxy-4-methyl-2-oxopentanoate. The product decarboxylates to 4-methyl-2 oxopentanoate. This Acinetobacter baylyi (strain ATCC 33305 / BD413 / ADP1) protein is 3-isopropylmalate dehydrogenase.